Here is a 505-residue protein sequence, read N- to C-terminus: Protein FAM114A2 (505 aa).

The disordered stretch occupies residues 1-65; it reads MSDKDDIETP…KPSSDLETSK (65 aa). Residues 51–63 are compositionally biased toward basic and acidic residues; sequence KRPETKPSSDLET. Phosphoserine is present on residues serine 87, serine 146, and serine 209. Positions 268–295 form a coiled coil; that stretch reads LNSLSGEELETLKVELEQLKETFSLAEF. Positions 342–366 are disordered; the sequence is KSLTKPLAENEEGEKQSEAENTEQV.

It belongs to the FAM114 family.

The polypeptide is Protein FAM114A2 (FAM114A2) (Homo sapiens (Human)).